The following is a 516-amino-acid chain: D-alanine--D-alanyl carrier protein ligase (516 aa).

156–157 is an ATP binding site; the sequence is TS. Aspartate 203 contacts D-alanine. 298-303 serves as a coordination point for ATP; sequence NAYGPT. Valine 307 contributes to the D-alanine binding site. ATP contacts are provided by residues aspartate 389, 401 to 404, and lysine 503; that span reads YGGR. Lysine 503 serves as a coordination point for D-alanine.

Belongs to the ATP-dependent AMP-binding enzyme family. DltA subfamily.

Its subcellular location is the cytoplasm. The catalysed reaction is holo-[D-alanyl-carrier protein] + D-alanine + ATP = D-alanyl-[D-alanyl-carrier protein] + AMP + diphosphate. It participates in cell wall biogenesis; lipoteichoic acid biosynthesis. Functionally, catalyzes the first step in the D-alanylation of lipoteichoic acid (LTA), the activation of D-alanine and its transfer onto the D-alanyl carrier protein (Dcp) DltC. In an ATP-dependent two-step reaction, forms a high energy D-alanyl-AMP intermediate, followed by transfer of the D-alanyl residue as a thiol ester to the phosphopantheinyl prosthetic group of the Dcp. D-alanylation of LTA plays an important role in modulating the properties of the cell wall in Gram-positive bacteria, influencing the net charge of the cell wall. The protein is D-alanine--D-alanyl carrier protein ligase of Streptococcus pneumoniae (strain ATCC 700669 / Spain 23F-1).